We begin with the raw amino-acid sequence, 731 residues long: DNA ligase (731 aa).

Residues 47–51 (DAEYD), 96–97 (SI), and Glu133 contribute to the NAD(+) site. Lys135 functions as the N6-AMP-lysine intermediate in the catalytic mechanism. Residues Arg156, Glu192, Lys313, and Lys337 each contribute to the NAD(+) site. The Zn(2+) site is built by Cys462, Cys465, Cys480, and Cys486. In terms of domain architecture, BRCT spans 645-731 (AATLPLAGMT…RGTPPNAGGA (87 aa)).

This sequence belongs to the NAD-dependent DNA ligase family. LigA subfamily. Mg(2+) serves as cofactor. The cofactor is Mn(2+).

The enzyme catalyses NAD(+) + (deoxyribonucleotide)n-3'-hydroxyl + 5'-phospho-(deoxyribonucleotide)m = (deoxyribonucleotide)n+m + AMP + beta-nicotinamide D-nucleotide.. DNA ligase that catalyzes the formation of phosphodiester linkages between 5'-phosphoryl and 3'-hydroxyl groups in double-stranded DNA using NAD as a coenzyme and as the energy source for the reaction. It is essential for DNA replication and repair of damaged DNA. This Acidovorax sp. (strain JS42) protein is DNA ligase.